A 64-amino-acid polypeptide reads, in one-letter code: Putative antitoxin VapB51 (64 aa).

Functionally, possibly the antitoxin component of a type II toxin-antitoxin (TA) system. Its cognate toxin is VapC51. The protein is Putative antitoxin VapB51 of Mycobacterium tuberculosis (strain ATCC 25618 / H37Rv).